The chain runs to 301 residues: Oxygen-dependent coproporphyrinogen-III oxidase (301 aa).

Residue serine 92 coordinates substrate. The a divalent metal cation site is built by histidine 96 and histidine 106. Residue histidine 106 is the Proton donor of the active site. 108–110 contacts substrate; sequence NVR. Residues histidine 145 and histidine 175 each contribute to the a divalent metal cation site. The segment at 240 to 275 is important for dimerization; the sequence is YVEFNLVWDRGTLFGLQTGGRTESILMSMPPLVRWE. 258-260 is a binding site for substrate; sequence GGR.

It belongs to the aerobic coproporphyrinogen-III oxidase family. As to quaternary structure, homodimer. It depends on a divalent metal cation as a cofactor.

The protein localises to the cytoplasm. The catalysed reaction is coproporphyrinogen III + O2 + 2 H(+) = protoporphyrinogen IX + 2 CO2 + 2 H2O. Its pathway is porphyrin-containing compound metabolism; protoporphyrin-IX biosynthesis; protoporphyrinogen-IX from coproporphyrinogen-III (O2 route): step 1/1. Involved in the heme biosynthesis. Catalyzes the aerobic oxidative decarboxylation of propionate groups of rings A and B of coproporphyrinogen-III to yield the vinyl groups in protoporphyrinogen-IX. The sequence is that of Oxygen-dependent coproporphyrinogen-III oxidase from Cronobacter sakazakii (strain ATCC BAA-894) (Enterobacter sakazakii).